The sequence spans 175 residues: NADH-quinone oxidoreductase subunit B (175 aa).

Residues Cys-49, Cys-50, Cys-115, and Cys-145 each contribute to the [4Fe-4S] cluster site.

Belongs to the complex I 20 kDa subunit family. In terms of assembly, NDH-1 is composed of 14 different subunits. Subunits NuoB, C, D, E, F, and G constitute the peripheral sector of the complex. [4Fe-4S] cluster is required as a cofactor.

It is found in the cell membrane. The catalysed reaction is a quinone + NADH + 5 H(+)(in) = a quinol + NAD(+) + 4 H(+)(out). NDH-1 shuttles electrons from NADH, via FMN and iron-sulfur (Fe-S) centers, to quinones in the respiratory chain. The immediate electron acceptor for the enzyme in this species is believed to be a menaquinone. Couples the redox reaction to proton translocation (for every two electrons transferred, four hydrogen ions are translocated across the cytoplasmic membrane), and thus conserves the redox energy in a proton gradient. The chain is NADH-quinone oxidoreductase subunit B from Heliobacterium modesticaldum (strain ATCC 51547 / Ice1).